A 759-amino-acid chain; its full sequence is Protein hunchback (759 aa).

2 disordered regions span residues 30–51 (EPGH…PIPS) and 171–215 (SSEK…EDMK). Residues 39-51 (SVASSPRQSPIPS) show a composition bias toward polar residues. Residue Thr-179 is modified to Phosphothreonine. Phosphoserine occurs at positions 189, 208, 210, and 211. The segment covering 199 to 215 (EPEKEHDQMSNSSEDMK) has biased composition (basic and acidic residues). 4 consecutive C2H2-type zinc fingers follow at residues 241–263 (YKCK…TRTH), 270–292 (LQCP…IRKH), 298–320 (FQCD…RKSH), and 326–350 (YRCA…KYGH). Disordered regions lie at residues 366–419 (LVID…TSQL), 513–565 (QLQQ…PQQP), and 606–696 (MTSP…APAS). Composition is skewed to low complexity over residues 399 to 419 (VAAV…TSQL) and 513 to 522 (QLQQQNQQQS). A compositionally biased stretch (acidic residues) spans 523-532 (DNEEEEQDDE). Phosphoserine is present on residues Ser-537 and Ser-540. Positions 655-696 (ANTSASSTASSSGNSSNASSNGNSSSNSSSNGTSSAAAAPAS) are enriched in low complexity. 2 consecutive C2H2-type zinc fingers follow at residues 706–728 (YECK…MGYH) and 734–758 (FKCN…RNAH).

This sequence belongs to the hunchback C2H2-type zinc-finger protein family.

Its subcellular location is the nucleus. Its function is as follows. Gap class segmentation protein that controls development of head structures. This chain is Protein hunchback, found in Drosophila yakuba (Fruit fly).